Reading from the N-terminus, the 422-residue chain is L-cysteine:1D-myo-inositol 2-amino-2-deoxy-alpha-D-glucopyranoside ligase (422 aa).

Residues 1–34 (MKSWSTPAPPTVPSRPDRLRLHDTATGRTRHPGN) form a disordered region. The span at 15 to 25 (RPDRLRLHDTA) shows a compositional bias: basic and acidic residues. Cysteine 44 serves as a coordination point for Zn(2+). L-cysteinyl-5'-AMP contacts are provided by residues 44–47 (CGIT), threonine 59, and 82–84 (NVT). The short motif at 46 to 56 (ITPYDATHLGH) is the 'HIGH' region element. The 'ERGGDP' region signature appears at 196-201 (ERGGDP). Position 237 (tryptophan 237) interacts with L-cysteinyl-5'-AMP. Cysteine 241 is a binding site for Zn(2+). Position 259–261 (259–261 (GSD)) interacts with L-cysteinyl-5'-AMP. Residue histidine 266 coordinates Zn(2+). Valine 292 is an L-cysteinyl-5'-AMP binding site. The 'KMSKS' region signature appears at 298–302 (KMSKS).

It belongs to the class-I aminoacyl-tRNA synthetase family. MshC subfamily. Monomer. Requires Zn(2+) as cofactor.

The catalysed reaction is 1D-myo-inositol 2-amino-2-deoxy-alpha-D-glucopyranoside + L-cysteine + ATP = 1D-myo-inositol 2-(L-cysteinylamino)-2-deoxy-alpha-D-glucopyranoside + AMP + diphosphate + H(+). Functionally, catalyzes the ATP-dependent condensation of GlcN-Ins and L-cysteine to form L-Cys-GlcN-Ins. This is L-cysteine:1D-myo-inositol 2-amino-2-deoxy-alpha-D-glucopyranoside ligase from Micrococcus luteus (strain ATCC 4698 / DSM 20030 / JCM 1464 / CCM 169 / CCUG 5858 / IAM 1056 / NBRC 3333 / NCIMB 9278 / NCTC 2665 / VKM Ac-2230) (Micrococcus lysodeikticus).